The sequence spans 275 residues: Large ribosomal subunit protein uL2cz (275 aa).

Disordered regions lie at residues 1–22 (MAIHLYKTSTPSTRNGAVDSQV) and 226–275 (NPVD…RRRK).

Belongs to the universal ribosomal protein uL2 family. As to quaternary structure, part of the 50S ribosomal subunit.

The protein localises to the plastid. Its subcellular location is the chloroplast. The chain is Large ribosomal subunit protein uL2cz (rpl2-A) from Chloranthus spicatus (Chulantree).